The sequence spans 200 residues: Probable gluconokinase (200 aa).

Gly-34–Thr-41 serves as a coordination point for ATP.

This sequence belongs to the gluconokinase GntK/GntV family.

It carries out the reaction D-gluconate + ATP = 6-phospho-D-gluconate + ADP + H(+). It participates in carbohydrate acid metabolism; D-gluconate degradation. This is Probable gluconokinase from Dictyostelium discoideum (Social amoeba).